A 213-amino-acid chain; its full sequence is Orotate phosphoribosyltransferase (213 aa).

Residue K26 coordinates 5-phospho-alpha-D-ribose 1-diphosphate. 34–35 is an orotate binding site; the sequence is FF. Residues 72–73, R99, K100, K103, H105, and 124–132 contribute to the 5-phospho-alpha-D-ribose 1-diphosphate site; these read YK and DDVITAGTA. Residues T128 and R156 each contribute to the orotate site.

Belongs to the purine/pyrimidine phosphoribosyltransferase family. PyrE subfamily. Homodimer. It depends on Mg(2+) as a cofactor.

The enzyme catalyses orotidine 5'-phosphate + diphosphate = orotate + 5-phospho-alpha-D-ribose 1-diphosphate. It functions in the pathway pyrimidine metabolism; UMP biosynthesis via de novo pathway; UMP from orotate: step 1/2. Functionally, catalyzes the transfer of a ribosyl phosphate group from 5-phosphoribose 1-diphosphate to orotate, leading to the formation of orotidine monophosphate (OMP). The protein is Orotate phosphoribosyltransferase of Vibrio atlanticus (strain LGP32) (Vibrio splendidus (strain Mel32)).